A 91-amino-acid polypeptide reads, in one-letter code: Small integral membrane protein 12 (91 aa).

Residues 12-34 (YAPYITFPVAFVVGAVGYQLEWF) traverse the membrane as a helical segment.

It belongs to the SMIM12 family.

It is found in the membrane. The protein is Small integral membrane protein 12 (smim12) of Xenopus tropicalis (Western clawed frog).